The chain runs to 339 residues: Glyceraldehyde-3-phosphate dehydrogenase (339 aa).

NAD(+)-binding positions include 12–13 (RI), Asp34, and Lys79. Residues 150 to 152 (SCT), Thr181, 210 to 211 (TG), and Arg233 contribute to the D-glyceraldehyde 3-phosphate site. The active-site Nucleophile is Cys151. Asn316 is an NAD(+) binding site.

This sequence belongs to the glyceraldehyde-3-phosphate dehydrogenase family. Homotetramer.

The protein localises to the cytoplasm. The enzyme catalyses D-glyceraldehyde 3-phosphate + phosphate + NAD(+) = (2R)-3-phospho-glyceroyl phosphate + NADH + H(+). Its pathway is carbohydrate degradation; glycolysis; pyruvate from D-glyceraldehyde 3-phosphate: step 1/5. In Cryptococcus neoformans var. neoformans serotype D (strain B-3501A) (Filobasidiella neoformans), this protein is Glyceraldehyde-3-phosphate dehydrogenase (GPD).